A 184-amino-acid polypeptide reads, in one-letter code: UPF0301 protein RHOS4_26140 (184 aa).

The protein belongs to the UPF0301 (AlgH) family.

The polypeptide is UPF0301 protein RHOS4_26140 (Cereibacter sphaeroides (strain ATCC 17023 / DSM 158 / JCM 6121 / CCUG 31486 / LMG 2827 / NBRC 12203 / NCIMB 8253 / ATH 2.4.1.) (Rhodobacter sphaeroides)).